We begin with the raw amino-acid sequence, 336 residues long: N-((2S)-2-amino-2-carboxyethyl)-L-glutamate dehydrogenase (336 aa).

The active-site Proton donor/acceptor is the lysine 78. NAD(+)-binding residues include arginine 122 and lysine 242.

It belongs to the ornithine cyclodeaminase/mu-crystallin family. Homodimer.

It catalyses the reaction N-[(2S)-2-amino-2-carboxyethyl]-L-glutamate + NAD(+) + H2O = (S)-2,3-diaminopropanoate + 2-oxoglutarate + NADH + H(+). The protein operates within siderophore biosynthesis. In terms of biological role, catalyzes the hydrolysis of N-((2S)-2-amino-2-carboxyethyl)-L-glutamate (ACEGA) to form L-2,3-diaminopropionic acid and 2-oxoglutarate. Involved in the biosynthesis of L-2,3-diaminopropionic acid (L-Dap), a precursor of staphyloferrin B and antibiotics. This is N-((2S)-2-amino-2-carboxyethyl)-L-glutamate dehydrogenase from Staphylococcus aureus (strain NCTC 8325 / PS 47).